A 638-amino-acid chain; its full sequence is Asparagine--tRNA ligase, cytoplasmic 2 (638 aa).

Residues 1-16 (MESHGKTHQKEHDNDL) are compositionally biased toward basic and acidic residues. Disordered stretches follow at residues 1 to 23 (MESH…PITL) and 62 to 87 (VKKN…DQAH).

It belongs to the class-II aminoacyl-tRNA synthetase family.

Its subcellular location is the cytoplasm. The protein localises to the cytosol. It catalyses the reaction tRNA(Asn) + L-asparagine + ATP = L-asparaginyl-tRNA(Asn) + AMP + diphosphate + H(+). This chain is Asparagine--tRNA ligase, cytoplasmic 2, found in Arabidopsis thaliana (Mouse-ear cress).